The chain runs to 885 residues: Alanine--tRNA ligase (885 aa).

Zn(2+)-binding residues include His569, His573, Cys672, and His676.

Belongs to the class-II aminoacyl-tRNA synthetase family. The cofactor is Zn(2+).

The protein resides in the cytoplasm. It catalyses the reaction tRNA(Ala) + L-alanine + ATP = L-alanyl-tRNA(Ala) + AMP + diphosphate. Its function is as follows. Catalyzes the attachment of alanine to tRNA(Ala) in a two-step reaction: alanine is first activated by ATP to form Ala-AMP and then transferred to the acceptor end of tRNA(Ala). Also edits incorrectly charged Ser-tRNA(Ala) and Gly-tRNA(Ala) via its editing domain. This Chlorobaculum tepidum (strain ATCC 49652 / DSM 12025 / NBRC 103806 / TLS) (Chlorobium tepidum) protein is Alanine--tRNA ligase.